Reading from the N-terminus, the 585-residue chain is Probable ubiquitin carboxyl-terminal hydrolase 9 (585 aa).

The interval 1–23 is disordered; that stretch reads MSLLRWMGMNSPGSTDRRKSTWE. The 384-residue stretch at 41 to 424 folds into the USP domain; that stretch reads YGLTNYGNTC…TAYVLFYTAA (384 aa). Cys-50 acts as the Nucleophile in catalysis. The tract at residues 85-110 is disordered; the sequence is CTKTNHPESSSSRHSKKKSMENRKSS. His-375 acts as the Proton acceptor in catalysis. Residues 447 to 470 are compositionally biased toward polar residues; it reads SQLKQESVEVSNLSSTPRSNSTIT. The segment at 447-473 is disordered; the sequence is SQLKQESVEVSNLSSTPRSNSTITYPD. Ser-505 bears the Phosphoserine mark. 2 disordered regions span residues 511-530 and 540-585; these read FHSRSVDASPKAVRRESRSF and KFFG…RSKR. Positions 542–551 are enriched in polar residues; that stretch reads FGSSQSNSPK. Residue Ser-549 is modified to Phosphoserine. The span at 553–570 shows a compositional bias: basic and acidic residues; the sequence is SPLRDTHKSSDEHSESKH. The span at 574–585 shows a compositional bias: polar residues; sequence LPWQFSRSRSKR.

This sequence belongs to the peptidase C19 family. As to quaternary structure, interacts with bun107 and bun62.

The protein localises to the nucleus. It localises to the cytoplasm. The protein resides in the cell tip. It catalyses the reaction Thiol-dependent hydrolysis of ester, thioester, amide, peptide and isopeptide bonds formed by the C-terminal Gly of ubiquitin (a 76-residue protein attached to proteins as an intracellular targeting signal).. Functionally, ubiquitin C-terminal hydrolase involved in regulating actin dynamics and/or endocytosis at cell tips and septa. The chain is Probable ubiquitin carboxyl-terminal hydrolase 9 (ubp9) from Schizosaccharomyces pombe (strain 972 / ATCC 24843) (Fission yeast).